The chain runs to 376 residues: Eugenol O-methyltransferase (376 aa).

S-adenosyl-L-methionine-binding residues include G219, D242, M263, and K276. H280 serves as the catalytic Proton acceptor.

This sequence belongs to the class I-like SAM-binding methyltransferase superfamily. Cation-independent O-methyltransferase family. COMT subfamily. In terms of assembly, homodimer. As to expression, expressed predominantly in root hairs.

The enzyme catalyses (E)-isoeugenol + S-adenosyl-L-methionine = (E)-isomethyleugenol + S-adenosyl-L-homocysteine + H(+). O-methyltransferase. Substrate preference is eugenol &gt;&gt; orcinol monomethyl ether &gt; resorcinol monomethyl ether. The protein is Eugenol O-methyltransferase (EOMT) of Sorghum bicolor (Sorghum).